Here is a 20-residue protein sequence, read N- to C-terminus: Basic phospholipase A2 cannitoxin alpha chain (20 aa).

Heterotrimer of alpha, beta, and gamma chains; non-covalently linked. Ca(2+) serves as cofactor. In terms of tissue distribution, expressed by the venom gland.

It is found in the secreted. It catalyses the reaction a 1,2-diacyl-sn-glycero-3-phosphocholine + H2O = a 1-acyl-sn-glycero-3-phosphocholine + a fatty acid + H(+). In terms of biological role, heterotrimer: Snake venom phospholipase A2 (PLA2) heterotrimer that acts as a potent presynaptic neurotoxin by blocking synaptic transmission and synaptic vesicle recycling. Enzymatic activity is essential for the neurotoxic effects. May act by binding in a calcium-dependent fashion to neurotonal pentraxin-1 (NPTX1) and neurotonal pentraxin-2 (NPTX2), but not to neuronal pentraxin receptor (NPTXR). Also binds to taipoxin-associated calcium binding protein 49 (RCN2), a protein localized in the lumen of endoplasmic reticulum. Monomer (alpha chain): Snake venom phospholipase A2 (PLA2) that possesses a low level of presynaptic activity and the same high enzymatic activity than the heterotrimer. PLA2 catalyzes the calcium-dependent hydrolysis of the 2-acyl groups in 3-sn-phosphoglycerides. The chain is Basic phospholipase A2 cannitoxin alpha chain from Oxyuranus scutellatus canni (Papuan taipan).